A 251-amino-acid chain; its full sequence is CDP-diacylglycerol pyrophosphatase (251 aa).

The chain crosses the membrane as a helical span at residues 4–24; sequence AGLLFLVMIVIAVVAAGIGYW.

This sequence belongs to the Cdh family.

It is found in the cell inner membrane. It catalyses the reaction a CDP-1,2-diacyl-sn-glycerol + H2O = a 1,2-diacyl-sn-glycero-3-phosphate + CMP + 2 H(+). It participates in phospholipid metabolism; CDP-diacylglycerol degradation; phosphatidate from CDP-diacylglycerol: step 1/1. The polypeptide is CDP-diacylglycerol pyrophosphatase (Escherichia coli (strain SE11)).